The primary structure comprises 450 residues: Tubulin alpha chain (450 aa).

Gln-11 contacts GTP. Lys-40 carries the post-translational modification N6-acetyllysine. Glu-71, Ser-140, Gly-144, Thr-145, Thr-179, Asn-206, and Asn-228 together coordinate GTP. Residue Glu-71 coordinates Mg(2+). Glu-254 is a catalytic residue. The segment at 431-450 is disordered; sequence DYEEVGTDSVGEEDEEGEEY.

This sequence belongs to the tubulin family. In terms of assembly, dimer of alpha and beta chains. A typical microtubule is a hollow water-filled tube with an outer diameter of 25 nm and an inner diameter of 15 nM. Alpha-beta heterodimers associate head-to-tail to form protofilaments running lengthwise along the microtubule wall with the beta-tubulin subunit facing the microtubule plus end conferring a structural polarity. Microtubules usually have 13 protofilaments but different protofilament numbers can be found in some organisms and specialized cells. The cofactor is Mg(2+). Post-translationally, some glutamate residues at the C-terminus are polyglycylated, resulting in polyglycine chains on the gamma-carboxyl group. Glycylation is mainly limited to tubulin incorporated into axonemes (cilia and flagella) whereas glutamylation is prevalent in neuronal cells, centrioles, axonemes, and the mitotic spindle. Both modifications can coexist on the same protein on adjacent residues, and lowering polyglycylation levels increases polyglutamylation, and reciprocally. The precise function of polyglycylation is still unclear. Some glutamate residues at the C-terminus are polyglutamylated, resulting in polyglutamate chains on the gamma-carboxyl group. Polyglutamylation plays a key role in microtubule severing by spastin (SPAST). SPAST preferentially recognizes and acts on microtubules decorated with short polyglutamate tails: severing activity by SPAST increases as the number of glutamates per tubulin rises from one to eight, but decreases beyond this glutamylation threshold. In terms of processing, acetylation of alpha chains at Lys-40 is located inside the microtubule lumen. This modification has been correlated with increased microtubule stability, intracellular transport and ciliary assembly. Post-translationally, undergoes a tyrosination/detyrosination cycle, the cyclic removal and re-addition of a C-terminal tyrosine residue by the enzymes tubulin tyrosine carboxypeptidase (MATCAP, VASH1 or VASH2) and tubulin tyrosine ligase (TTL), respectively. Tyrosination promotes microtubule interaction with CAP-Gly microtubule plus-end tracking proteins. Tyrosinated tubulins regulate the initiation of dynein-driven motility. In terms of processing, detyrosination is involved in metaphase plate congression by guiding chromosomes during mitosis. Detyrosination increases microtubules-dependent mechanotransduction in dystrophic cardiac and skeletal muscle. In cardiomyocytes, detyrosinated microtubules are required to resist to contractile compression during contraction.

It localises to the cytoplasm. Its subcellular location is the cytoskeleton. The enzyme catalyses GTP + H2O = GDP + phosphate + H(+). In terms of biological role, tubulin is the major constituent of microtubules, a cylinder consisting of laterally associated linear protofilaments composed of alpha- and beta-tubulin heterodimers. Microtubules grow by the addition of GTP-tubulin dimers to the microtubule end, where a stabilizing cap forms. Below the cap, tubulin dimers are in GDP-bound state, owing to GTPase activity of alpha-tubulin. In Oncorhynchus keta (Chum salmon), this protein is Tubulin alpha chain.